The primary structure comprises 108 residues: UPF0060 membrane protein Sca_1835 (108 aa).

4 helical membrane-spanning segments follow: residues 5-25, 34-54, 60-80, and 84-104; these read ILIFILAGLCEIGGGYLIWLW, FGLLGGILLISYGIVATFQVF, VYAAYGGVFIVMSILWGYVFD, and PDKYDVLGAIVCIIGVLIMLL.

Belongs to the UPF0060 family.

It is found in the cell membrane. This is UPF0060 membrane protein Sca_1835 from Staphylococcus carnosus (strain TM300).